The chain runs to 196 residues: Interferon lambda-3 (196 aa).

Residues 1–21 form the signal peptide; sequence MTGDCMPVLVLMAAVLTVTGA. Disulfide bonds link Cys-37-Cys-136, Cys-71-Cys-169, and Cys-188-Cys-195.

The protein belongs to the lambda interferon family.

It localises to the secreted. In terms of biological role, cytokine with antiviral, antitumour and immunomodulatory activities. Plays a critical role in the antiviral host defense, predominantly in the epithelial tissues. Acts as a ligand for the heterodimeric class II cytokine receptor composed of IL10RB and IFNLR1, and receptor engagement leads to the activation of the JAK/STAT signaling pathway resulting in the expression of IFN-stimulated genes (ISG), which mediate the antiviral state. Has a restricted receptor distribution and therefore restricted targets: is primarily active in epithelial cells and this cell type-selective action is because of the epithelial cell-specific expression of its receptor IFNLR1. Seems not to be essential for early virus-activated host defense in vaginal infection, but plays an important role in Toll-like receptor (TLR)-induced antiviral defense. Plays a significant role in the antiviral immune defense in the intestinal epithelium. Exerts an immunomodulatory effect by up-regulating MHC class I antigen expression. This Homo sapiens (Human) protein is Interferon lambda-3 (IFNL3).